We begin with the raw amino-acid sequence, 443 residues long: ATP-dependent protease ATPase subunit HslU (443 aa).

ATP-binding positions include Ile18, 60–65 (GVGKTE), Asp256, Glu321, and Arg393.

It belongs to the ClpX chaperone family. HslU subfamily. In terms of assembly, a double ring-shaped homohexamer of HslV is capped on each side by a ring-shaped HslU homohexamer. The assembly of the HslU/HslV complex is dependent on binding of ATP.

It is found in the cytoplasm. Its function is as follows. ATPase subunit of a proteasome-like degradation complex; this subunit has chaperone activity. The binding of ATP and its subsequent hydrolysis by HslU are essential for unfolding of protein substrates subsequently hydrolyzed by HslV. HslU recognizes the N-terminal part of its protein substrates and unfolds these before they are guided to HslV for hydrolysis. This Salmonella typhi protein is ATP-dependent protease ATPase subunit HslU.